The chain runs to 205 residues: dTTP/UTP pyrophosphatase (205 aa).

The active-site Proton acceptor is Asp81.

Belongs to the Maf family. YhdE subfamily. A divalent metal cation serves as cofactor.

The protein localises to the cytoplasm. It carries out the reaction dTTP + H2O = dTMP + diphosphate + H(+). The catalysed reaction is UTP + H2O = UMP + diphosphate + H(+). In terms of biological role, nucleoside triphosphate pyrophosphatase that hydrolyzes dTTP and UTP. May have a dual role in cell division arrest and in preventing the incorporation of modified nucleotides into cellular nucleic acids. This chain is dTTP/UTP pyrophosphatase, found in Agathobacter rectalis (strain ATCC 33656 / DSM 3377 / JCM 17463 / KCTC 5835 / VPI 0990) (Eubacterium rectale).